Consider the following 286-residue polypeptide: Bifunctional protein FolD (286 aa).

NADP(+) contacts are provided by residues 164–166, serine 193, and isoleucine 234; that span reads GRS.

It belongs to the tetrahydrofolate dehydrogenase/cyclohydrolase family. In terms of assembly, homodimer.

It catalyses the reaction (6R)-5,10-methylene-5,6,7,8-tetrahydrofolate + NADP(+) = (6R)-5,10-methenyltetrahydrofolate + NADPH. The enzyme catalyses (6R)-5,10-methenyltetrahydrofolate + H2O = (6R)-10-formyltetrahydrofolate + H(+). The protein operates within one-carbon metabolism; tetrahydrofolate interconversion. In terms of biological role, catalyzes the oxidation of 5,10-methylenetetrahydrofolate to 5,10-methenyltetrahydrofolate and then the hydrolysis of 5,10-methenyltetrahydrofolate to 10-formyltetrahydrofolate. The chain is Bifunctional protein FolD from Maridesulfovibrio salexigens (strain ATCC 14822 / DSM 2638 / NCIMB 8403 / VKM B-1763) (Desulfovibrio salexigens).